A 434-amino-acid polypeptide reads, in one-letter code: Putative G3BP-like protein (434 aa).

The NTF2 domain maps to 18–134 (IGWMFVQEYY…YFVLNDIFRF (117 aa)). 2 disordered regions span residues 141-180 (EEEE…EGHY) and 274-308 (VKSQ…PYTQ). Phosphoserine is present on serine 145. The segment covering 148 to 157 (AVEKEKKDVA) has biased composition (basic and acidic residues). Low complexity predominate over residues 276–291 (SQASVSSTASTTGQTV). Positions 296–308 (ADQTQQPTAPYTQ) are enriched in polar residues. Positions 315-386 (TSVFVKNIPP…ATLNIEERRR (72 aa)) constitute an RRM domain. Residues 390 to 434 (GKFNKSGDKKSNDNYNGMKRNFRKGNRGAFDGRSKEVTTSKKQNN) form a disordered region. Residues 419 to 428 (FDGRSKEVTT) are compositionally biased toward basic and acidic residues.

Its function is as follows. Probable scaffold protein that may be involved in mRNA transport. The polypeptide is Putative G3BP-like protein (nxt3) (Schizosaccharomyces pombe (strain 972 / ATCC 24843) (Fission yeast)).